Here is a 69-residue protein sequence, read N- to C-terminus: Double-strand break reduction protein (69 aa).

Its function is as follows. Helps to maintain the integrity of the chromosome by lowering the steady-state level of double strand breaks. This region of DNA acts as an antitoxin to toxin RalR, a DNase, but it seems to be sRNA RalA that has the antitoxin activity and not this putative protein. Therefore the identity of this as a protein-coding gene has been cast into doubt. This chain is Double-strand break reduction protein, found in Escherichia coli (strain K12).